The primary structure comprises 520 residues: Calcium-dependent protein kinase 25 (520 aa).

The N-myristoyl glycine moiety is linked to residue Gly-2. Residues 31–87 form a disordered region; that stretch reads PLKPQLQDKPPQPMLMNKDDDKTKLNDTHGDPKLLEGKEKPAQKQTSQGQGGRKCSD. The span at 47 to 72 shows a compositional bias: basic and acidic residues; the sequence is NKDDDKTKLNDTHGDPKLLEGKEKPA. The region spanning 132–390 is the Protein kinase domain; the sequence is YNLGSKLGHG…AQQVLCHPWI (259 aa). ATP contacts are provided by residues 138–146 and Lys-161; that span reads LGHGQFGTT. Asp-256 functions as the Proton acceptor in the catalytic mechanism. Ser-296 carries the phosphoserine modification. An autoinhibitory domain region spans residues 396–426; sequence APDTPLDTTVLSRLKKFSATDKLKKMALRVI. The 36-residue stretch at 433–468 folds into the EF-hand 1 domain; it reads EEIHELRETFKTIDSGKSGRVTYKELKNGLERFNTN. Asp-446, Ser-450, Arg-452, Glu-457, Asp-483, Glu-487, Thr-489, and Glu-494 together coordinate Ca(2+). The EF-hand 2; degenerate domain occupies 469-505; it reads LDNSDINSLMQIPTDVHLEDTVDYNEFIEAIVRLRQI.

It belongs to the protein kinase superfamily. Ser/Thr protein kinase family. CDPK subfamily.

It localises to the membrane. The enzyme catalyses L-seryl-[protein] + ATP = O-phospho-L-seryl-[protein] + ADP + H(+). It carries out the reaction L-threonyl-[protein] + ATP = O-phospho-L-threonyl-[protein] + ADP + H(+). Activated by calcium. Autophosphorylation may play an important role in the regulation of the kinase activity. Its function is as follows. May play a role in signal transduction pathways that involve calcium as a second messenger. The protein is Calcium-dependent protein kinase 25 (CPK25) of Arabidopsis thaliana (Mouse-ear cress).